The sequence spans 158 residues: Globin CTT-I/CTT-IA (158 aa).

Residues 1–15 (MKFLILALCVAAAMA) form the signal peptide. Positions 16-158 (GPSGDQIAAA…FVFSTLKNEL (143 aa)) constitute a Globin domain. Positions 74 and 109 each coordinate heme b.

The protein belongs to the globin family. As to quaternary structure, monomer.

The sequence is that of Globin CTT-I/CTT-IA (CTT-1) from Chironomus thummi thummi (Midge).